The chain runs to 55 residues: Photosystem II reaction center protein K (55 aa).

Positions 1–18 (MFNIYLENAFYLNGITFA) are excised as a propeptide. A helical transmembrane segment spans residues 26 to 46 (IFDPIVDVMPIIPLFFFLLAF).

Belongs to the PsbK family. As to quaternary structure, PSII is composed of 1 copy each of membrane proteins PsbA, PsbB, PsbC, PsbD, PsbE, PsbF, PsbH, PsbI, PsbJ, PsbK, PsbL, PsbM, PsbT, PsbX, PsbY, PsbZ, Psb30/Ycf12, at least 3 peripheral proteins of the oxygen-evolving complex and a large number of cofactors. It forms dimeric complexes.

It is found in the plastid. Its subcellular location is the chloroplast thylakoid membrane. Its function is as follows. One of the components of the core complex of photosystem II (PSII). PSII is a light-driven water:plastoquinone oxidoreductase that uses light energy to abstract electrons from H(2)O, generating O(2) and a proton gradient subsequently used for ATP formation. It consists of a core antenna complex that captures photons, and an electron transfer chain that converts photonic excitation into a charge separation. The sequence is that of Photosystem II reaction center protein K from Marchantia polymorpha (Common liverwort).